We begin with the raw amino-acid sequence, 353 residues long: MTATLERRESANLWGRFCEFITSTENRLYIGWFGVIMIPCLLTAISVYIIAFVAAPPVDIDGIREPVSGSLLYGNNIISGSVIPMSNAIGLHFYPIWEAASLDEWLYNGGPYLMVVCHFLLGIACYMGREWELSFRLGMRPWIAVAYSAPVAAATAVFLIYPIGQGSFSDGMPLGISGTFNFMIVFQAEHNILMHPFHMLGVAGVFGGSLFSAMHGSLVTSSLIRETTENESANAGYKFGQEEETYNIVAAHGYFGRLIFQYASFNNSRSLHFFLAVWPVVGIWFTAMGISTMAFNLNGFNFNQSVVDSQGRVINTWADIINRANLGMEVMHERNAHNFPLDLASVEAPAVNG.

Thr2 carries the N-acetylthreonine modification. Phosphothreonine is present on Thr2. A run of 3 helical transmembrane segments spans residues 29–46 (YIGWFGVIMIPCLLTAIS), 118–133 (HFLLGIACYMGREWEL), and 142–156 (WIAVAYSAPVAAATA). Residue His118 participates in chlorophyll a binding. Tyr126 lines the pheophytin a pocket. Asp170 and Glu189 together coordinate [CaMn4O5] cluster. A helical membrane pass occupies residues 197 to 218 (FHMLGVAGVFGGSLFSAMHGSL). A chlorophyll a-binding site is contributed by His198. Residues His215 and 264–265 (SF) contribute to the a quinone site. Position 215 (His215) interacts with Fe cation. His272 provides a ligand contact to Fe cation. The helical transmembrane segment at 274 to 288 (FLAVWPVVGIWFTAM) threads the bilayer. [CaMn4O5] cluster-binding residues include His332, Glu333, Asp342, and Ala344. A propeptide spanning residues 345–353 (SVEAPAVNG) is cleaved from the precursor.

Belongs to the reaction center PufL/M/PsbA/D family. In terms of assembly, PSII is composed of 1 copy each of membrane proteins PsbA, PsbB, PsbC, PsbD, PsbE, PsbF, PsbH, PsbI, PsbJ, PsbK, PsbL, PsbM, PsbT, PsbX, PsbY, PsbZ, Psb30/Ycf12, at least 3 peripheral proteins of the oxygen-evolving complex and a large number of cofactors. It forms dimeric complexes. It depends on The D1/D2 heterodimer binds P680, chlorophylls that are the primary electron donor of PSII, and subsequent electron acceptors. It shares a non-heme iron and each subunit binds pheophytin, quinone, additional chlorophylls, carotenoids and lipids. D1 provides most of the ligands for the Mn4-Ca-O5 cluster of the oxygen-evolving complex (OEC). There is also a Cl(-1) ion associated with D1 and D2, which is required for oxygen evolution. The PSII complex binds additional chlorophylls, carotenoids and specific lipids. as a cofactor. Post-translationally, tyr-161 forms a radical intermediate that is referred to as redox-active TyrZ, YZ or Y-Z. In terms of processing, C-terminally processed by CTPA; processing is essential to allow assembly of the oxygen-evolving complex and thus photosynthetic growth.

It is found in the plastid. It localises to the chloroplast thylakoid membrane. It catalyses the reaction 2 a plastoquinone + 4 hnu + 2 H2O = 2 a plastoquinol + O2. Photosystem II (PSII) is a light-driven water:plastoquinone oxidoreductase that uses light energy to abstract electrons from H(2)O, generating O(2) and a proton gradient subsequently used for ATP formation. It consists of a core antenna complex that captures photons, and an electron transfer chain that converts photonic excitation into a charge separation. The D1/D2 (PsbA/PsbD) reaction center heterodimer binds P680, the primary electron donor of PSII as well as several subsequent electron acceptors. The sequence is that of Photosystem II protein D1 from Mesostigma viride (Green alga).